The primary structure comprises 654 residues: tRNA 5-methylaminomethyl-2-thiouridine biosynthesis bifunctional protein MnmC (654 aa).

Residues Met-1–Gln-235 form a tRNA (mnm(5)s(2)U34)-methyltransferase region. The interval Val-261–Gly-654 is FAD-dependent cmnm(5)s(2)U34 oxidoreductase.

The protein in the N-terminal section; belongs to the methyltransferase superfamily. tRNA (mnm(5)s(2)U34)-methyltransferase family. It in the C-terminal section; belongs to the DAO family. The cofactor is FAD.

The protein resides in the cytoplasm. The enzyme catalyses 5-aminomethyl-2-thiouridine(34) in tRNA + S-adenosyl-L-methionine = 5-methylaminomethyl-2-thiouridine(34) in tRNA + S-adenosyl-L-homocysteine + H(+). Functionally, catalyzes the last two steps in the biosynthesis of 5-methylaminomethyl-2-thiouridine (mnm(5)s(2)U) at the wobble position (U34) in tRNA. Catalyzes the FAD-dependent demodification of cmnm(5)s(2)U34 to nm(5)s(2)U34, followed by the transfer of a methyl group from S-adenosyl-L-methionine to nm(5)s(2)U34, to form mnm(5)s(2)U34. The chain is tRNA 5-methylaminomethyl-2-thiouridine biosynthesis bifunctional protein MnmC from Pseudomonas aeruginosa (strain ATCC 15692 / DSM 22644 / CIP 104116 / JCM 14847 / LMG 12228 / 1C / PRS 101 / PAO1).